Here is a 648-residue protein sequence, read N- to C-terminus: MTLNAESEALVGVSHPLDPLSRVEIARAVAILKEGPAAAESFRFISVELREPSKDDLRAGVAVAREADAVLVDRAQARSFEAVVDLEAGTVDSWKLLAENIQPPFMLDEFAECEDACRKDPEVIAALAKRGLTNLDLVCFEPWSVGYFGEDNEGRRLMRALVFVRDEADDSPYAHPIENFIVFYDLNAGKVVRLEDDQAIPVPSARGNYLPKYVGEARTDLKPLNITQPEGASFTVTGNHVTWADWSFRVGFTPREGLVLHQLKFKDQGVDRPVINRASLSEMVVPYGDTAPVQAKKNAFDSGEYNIGNMANSLTLGCDCLGEIKYFDGHSVDSHGNPWTIENAICMHEEDDSILWKHFDFREGTAETRRSRKLVISFIATVANYEYAFYWHLFLDGSIEFLVKATGILSTAGQLPGEKNPYGQSLNNDGLYAPIHQHMFNVRMDFELDGVKNAVYEVDMEYPEHNPTGTAFMAVDRLLETEQKAIRKTNEAKHRFWKIANHESKNLVNEPVAYRLIPTNGIQLAARDDAYVSKRAQFARNNLWVTAYDRTERFAAGEYPNQATGADDGLHIWTQKDRNIVDTDLVVWYTFGMHHVVRLEDWPVMPRQNIGFMLEPHGFFNQNPTLNLPTSTSTTQTGEADTCCHNGK.

Residues 1–9 constitute a propeptide that is removed on maturation; it reads MTLNAESEA. Substrate is bound at residue 299-310; it reads AFDSGEYNIGNM. Residue Asp301 is the Proton acceptor of the active site. Cysteines 320 and 346 form a disulfide. 382–387 is a binding site for substrate; sequence VANYEY. Catalysis depends on Tyr385, which acts as the Schiff-base intermediate with substrate; via topaquinone. The residue at position 385 (Tyr385) is a 2',4',5'-topaquinone. Cu cation-binding residues include His436 and His438. The Mn(2+) site is built by Asp445, Phe446, and Asp584. His595 serves as a coordination point for Cu cation.

The protein belongs to the copper/topaquinone oxidase family. As to quaternary structure, homodimer. Cu cation serves as cofactor. It depends on Zn(2+) as a cofactor. Requires L-topaquinone as cofactor. The cofactor is Mn(2+). Topaquinone (TPQ) is generated by copper-dependent autoxidation of a specific tyrosyl residue.

It carries out the reaction a primary methyl amine + O2 + H2O = an aldehyde + H2O2 + NH4(+). Its function is as follows. The exact function of MaoXI is not known. The polypeptide is Primary amine oxidase (maoI) (Arthrobacter sp. (strain P1)).